The primary structure comprises 208 residues: MSSGLIGKKVGMTSVFDDEGNNVACTVVEAGPNVVTQVKSEGRDGYSAVQLGFDNVKEKNVTQAMLGHFEKAGCPPKRMLSEFRDFGDDVDLGDVVRVQDLFQEDERIDVVGVSKGKGFQGVVKRHGFSGVGMMTHGQSDRQRHPGSIGASADPSRVFKGVRMAGQTGGERTKIQNLRVVRILADQNAILIHGSVPGPKSEYVELHKK.

It belongs to the universal ribosomal protein uL3 family. Part of the 50S ribosomal subunit. Forms a cluster with proteins L14 and L19.

In terms of biological role, one of the primary rRNA binding proteins, it binds directly near the 3'-end of the 23S rRNA, where it nucleates assembly of the 50S subunit. This Salinibacter ruber (strain DSM 13855 / M31) protein is Large ribosomal subunit protein uL3.